Reading from the N-terminus, the 215-residue chain is S-crystallin 2 (215 aa).

The 79-residue stretch at 2 to 80 (PSYTLHYFNH…YLAREFGFHG (79 aa)) folds into the GST N-terminal domain. The GST C-terminal domain occupies 82 to 215 (NNLDMARVDF…YLKSRSSTDF (134 aa)).

The protein belongs to the GST superfamily. Lens.

S-crystallins are structural components of squids and octopi eye lens. Contains relatively little GST activity (1/1000 of that of mammalian GST enzyme). The protein is S-crystallin 2 (OCTS2) of Octopus vulgaris (Common octopus).